We begin with the raw amino-acid sequence, 4146 residues long: DNA-dependent protein kinase catalytic subunit (4146 aa).

4 HEAT repeats span residues 308-343 (DDYQ…LKQI), 925-962 (VIYL…VAFM), 1026-1062 (QDTV…LRWS), and 1075-1111 (PVNT…YRDF). TPR repeat units lie at residues 1745 to 1778 (PMKS…SQSP) and 1974 to 2007 (VFSE…QRNY). At serine 2075 the chain carries Phosphoserine; by autocatalysis. At threonine 2631 the chain carries Phosphothreonine; by autocatalysis. Residue serine 2634 is modified to Phosphoserine; by autocatalysis. Phosphothreonine; by autocatalysis occurs at positions 2659 and 2668. In terms of domain architecture, FAT spans 2873–3556 (FIACVQDMCY…VYPFMVSGES (684 aa)). The PI3K/PI4K catalytic domain maps to 3739-4071 (FDERVSVMAS…IHCAKRKLDG (333 aa)). Residues 3745-3751 (VMASIRK) form a G-loop region. Residues 3937-3945 (GIGDRHLSN) form a catalytic loop region. The activation loop stretch occupies residues 3957–3982 (GIDFGHAFGTATQFLPVPELMPFRLT). The FATC domain occupies 4114–4146 (DGLTEETQVQCLIDQATDPNILGRVWKGWEPWI).

Belongs to the PI3/PI4-kinase family. As to quaternary structure, DNA-PK is a heterotrimer of prkdc and the Ku dimer (composed of xrcc6/Ku70 and xrcc5/Ku86). Component of the core long-range non-homologous end joining (NHEJ) complex (also named DNA-PK complex) composed of prkdc, lig4, xrcc4, xrcc6/ku70, xrcc5/ku86 and nhej1/xlf. Additional component of the NHEJ complex includes paxx. Following autophosphorylation, prkdc dissociates from DNA. Post-translationally, autophosphorylated at two clusters, the T2609 cluster and the S2056 cluster. Autophosphorylated on Ser-2075, Thr-2631, Thr-2659 and Thr-2668. Ser-2075 and Thr-2668 are DNA damage-inducible phosphorylation sites (inducible with ionizing radiation, IR) dephosphorylated by PPP5C. Autophosphorylation induces a conformational change that leads to remodeling of the DNA-PK complex, requisite for efficient end processing and DNA repair. Autophosphorylation in trans within DNA-PK complexes loaded on DNA ends leads to the dissociation of PRKDC from DNA and the transition into the short-range NHEJ complex. Autophosphorylation of the T2609 cluster is required for hematopoietic development and protein synthesis in erythrocytes precursors.

The protein resides in the nucleus. The protein localises to the nucleolus. The catalysed reaction is L-seryl-[protein] + ATP = O-phospho-L-seryl-[protein] + ADP + H(+). The enzyme catalyses L-threonyl-[protein] + ATP = O-phospho-L-threonyl-[protein] + ADP + H(+). Serine/threonine-protein kinase that acts as a molecular sensor for DNA damage. Involved in DNA nonhomologous end joining (NHEJ) required for double-strand break (DSB) repair and V(D)J recombination. Must be bound to DNA to express its catalytic properties. Promotes processing of hairpin DNA structures in V(D)J recombination by activation of the hairpin endonuclease artemis (DCLRE1C). Recruited by XRCC5 and XRCC6 to DNA ends and is required to (1) protect and align broken ends of DNA, thereby preventing their degradation, (2) and sequester the DSB for repair by NHEJ. Acts as a scaffold protein to aid the localization of DNA repair proteins to the site of damage. The assembly of the DNA-PK complex at DNA ends is also required for the NHEJ ligation step. Found at the ends of chromosomes, suggesting a further role in the maintenance of telomeric stability and the prevention of chromosomal end fusion. As part of the DNA-PK complex, involved in the early steps of ribosome assembly by promoting the processing of precursor rRNA into mature 18S rRNA in the small-subunit processome. Recognizes the substrate consensus sequence [ST]-Q. Phosphorylates 'Ser-139' of histone variant H2AX, thereby regulating DNA damage response mechanism. The sequence is that of DNA-dependent protein kinase catalytic subunit (prkdc) from Xenopus laevis (African clawed frog).